The sequence spans 160 residues: Transcription elongation factor GreA (160 aa).

The stretch at methionine 1–arginine 72 forms a coiled coil.

Belongs to the GreA/GreB family.

Functionally, necessary for efficient RNA polymerase transcription elongation past template-encoded arresting sites. The arresting sites in DNA have the property of trapping a certain fraction of elongating RNA polymerases that pass through, resulting in locked ternary complexes. Cleavage of the nascent transcript by cleavage factors such as GreA or GreB allows the resumption of elongation from the new 3'terminus. GreA releases sequences of 2 to 3 nucleotides. The protein is Transcription elongation factor GreA of Streptococcus thermophilus (strain CNRZ 1066).